Here is a 391-residue protein sequence, read N- to C-terminus: GTPase Obg (391 aa).

The Obg domain maps to methionine 1–leucine 159. One can recognise an OBG-type G domain in the interval alanine 160 to glutamate 333. Residues glycine 166 to serine 173, phenylalanine 191 to isoleucine 195, aspartate 213 to glycine 216, asparagine 283 to aspartate 286, and serine 314 to alanine 316 each bind GTP. Mg(2+) contacts are provided by serine 173 and threonine 193. A compositionally biased stretch (basic and acidic residues) spans leucine 367–asparagine 377. A disordered region spans residues leucine 367–proline 391. Positions aspartate 378–proline 391 are enriched in acidic residues.

This sequence belongs to the TRAFAC class OBG-HflX-like GTPase superfamily. OBG GTPase family. Monomer. Requires Mg(2+) as cofactor.

The protein localises to the cytoplasm. Functionally, an essential GTPase which binds GTP, GDP and possibly (p)ppGpp with moderate affinity, with high nucleotide exchange rates and a fairly low GTP hydrolysis rate. Plays a role in control of the cell cycle, stress response, ribosome biogenesis and in those bacteria that undergo differentiation, in morphogenesis control. This chain is GTPase Obg, found in Alcanivorax borkumensis (strain ATCC 700651 / DSM 11573 / NCIMB 13689 / SK2).